We begin with the raw amino-acid sequence, 290 residues long: 33 kDa chaperonin (290 aa).

Disulfide bonds link C231-C233 and C263-C266.

Belongs to the HSP33 family. In terms of processing, under oxidizing conditions two disulfide bonds are formed involving the reactive cysteines. Under reducing conditions zinc is bound to the reactive cysteines and the protein is inactive.

The protein resides in the cytoplasm. Redox regulated molecular chaperone. Protects both thermally unfolding and oxidatively damaged proteins from irreversible aggregation. Plays an important role in the bacterial defense system toward oxidative stress. This Thermotoga sp. (strain RQ2) protein is 33 kDa chaperonin.